Here is a 400-residue protein sequence, read N- to C-terminus: 3-phenylpropionate/cinnamic acid dioxygenase ferredoxin--NAD(+) reductase component (400 aa).

Residue 5 to 36 (TIIIVGGGQAAAMAAASLRQQGFTGELHLFSD) coordinates FAD. 146 to 174 (SVVIVGAGTIGLELAASATQRGCKATVIE) is an NAD(+) binding site.

Belongs to the bacterial ring-hydroxylating dioxygenase ferredoxin reductase family. In terms of assembly, this dioxygenase system consists of four proteins: the two subunits of the hydroxylase component (HcaE and HcaF), a ferredoxin (HcaC) and a ferredoxin reductase (HcaD). It depends on FAD as a cofactor.

The catalysed reaction is 2 reduced [2Fe-2S]-[ferredoxin] + NAD(+) + H(+) = 2 oxidized [2Fe-2S]-[ferredoxin] + NADH. It participates in aromatic compound metabolism; 3-phenylpropanoate degradation. Its function is as follows. Part of the multicomponent 3-phenylpropionate dioxygenase, that converts 3-phenylpropionic acid (PP) and cinnamic acid (CI) into 3-phenylpropionate-dihydrodiol (PP-dihydrodiol) and cinnamic acid-dihydrodiol (CI-dihydrodiol), respectively. The protein is 3-phenylpropionate/cinnamic acid dioxygenase ferredoxin--NAD(+) reductase component of Escherichia coli O7:K1 (strain IAI39 / ExPEC).